Here is a 437-residue protein sequence, read N- to C-terminus: Amino-acid acetyltransferase (437 aa).

An N-acetyltransferase domain is found at 289-429; the sequence is ENIRLATSFD…EHYNYQRMSK (141 aa).

Belongs to the acetyltransferase family. ArgA subfamily.

It is found in the cytoplasm. It carries out the reaction L-glutamate + acetyl-CoA = N-acetyl-L-glutamate + CoA + H(+). It functions in the pathway amino-acid biosynthesis; L-arginine biosynthesis; N(2)-acetyl-L-ornithine from L-glutamate: step 1/4. In Actinobacillus pleuropneumoniae serotype 5b (strain L20), this protein is Amino-acid acetyltransferase.